A 116-amino-acid polypeptide reads, in one-letter code: Putative pterin-4-alpha-carbinolamine dehydratase (116 aa).

This sequence belongs to the pterin-4-alpha-carbinolamine dehydratase family.

The enzyme catalyses (4aS,6R)-4a-hydroxy-L-erythro-5,6,7,8-tetrahydrobiopterin = (6R)-L-erythro-6,7-dihydrobiopterin + H2O. The protein is Putative pterin-4-alpha-carbinolamine dehydratase of Xylella fastidiosa (strain M23).